Consider the following 217-residue polypeptide: Large ribosomal subunit protein bL25 (217 aa).

The segment at 178 to 217 is disordered; the sequence is VVAPTEEPTEEEIEAMEGEQQTEEPEVVGESKEDEEKTEE. Residues 184–205 are compositionally biased toward acidic residues; the sequence is EPTEEEIEAMEGEQQTEEPEVV. A compositionally biased stretch (basic and acidic residues) spans 206-217; sequence GESKEDEEKTEE.

Belongs to the bacterial ribosomal protein bL25 family. CTC subfamily. As to quaternary structure, part of the 50S ribosomal subunit; part of the 5S rRNA/L5/L18/L25 subcomplex. Contacts the 5S rRNA. Binds to the 5S rRNA independently of L5 and L18.

Functionally, this is one of the proteins that binds to the 5S RNA in the ribosome where it forms part of the central protuberance. The polypeptide is Large ribosomal subunit protein bL25 (Staphylococcus aureus (strain USA300)).